We begin with the raw amino-acid sequence, 549 residues long: Lipase 3 (549 aa).

Positions 1–15 are cleaved as a signal peptide; sequence MKLALALSLIASVAA. Cys75 and Cys112 are oxidised to a cystine. The active-site Acyl-ester intermediate is Ser224. An intrachain disulfide couples Cys283 to Cys292. The N-linked (GlcNAc...) asparagine glycan is linked to Asn329. The active-site Charge relay system is the Glu356. An N-linked (GlcNAc...) asparagine glycan is attached at Asn366. Residue His464 is the Charge relay system of the active site.

This sequence belongs to the type-B carboxylesterase/lipase family. Monomer and homodimer.

It catalyses the reaction a triacylglycerol + H2O = a diacylglycerol + a fatty acid + H(+). In Diutina rugosa (Yeast), this protein is Lipase 3 (LIP3).